A 125-amino-acid polypeptide reads, in one-letter code: Ribonuclease P protein component (125 aa).

Belongs to the RnpA family. In terms of assembly, consists of a catalytic RNA component (M1 or rnpB) and a protein subunit.

The enzyme catalyses Endonucleolytic cleavage of RNA, removing 5'-extranucleotides from tRNA precursor.. In terms of biological role, RNaseP catalyzes the removal of the 5'-leader sequence from pre-tRNA to produce the mature 5'-terminus. It can also cleave other RNA substrates such as 4.5S RNA. The protein component plays an auxiliary but essential role in vivo by binding to the 5'-leader sequence and broadening the substrate specificity of the ribozyme. This chain is Ribonuclease P protein component, found in Clostridium perfringens (strain ATCC 13124 / DSM 756 / JCM 1290 / NCIMB 6125 / NCTC 8237 / Type A).